A 310-amino-acid polypeptide reads, in one-letter code: Mitochondrial 2-oxodicarboxylate carrier 1 (310 aa).

The next 6 membrane-spanning stretches (helical) occupy residues 9-29, 78-97, 126-146, 179-199, 219-239, and 281-301; these read LPFI…LLVM, SHLY…KRAI, IYSG…FELV, GLEA…GIIF, LIAG…FDVV, and MRLA…MDFF. Solcar repeat units lie at residues 9–108, 120–204, and 213–300; these read LPFI…FQTF, MTQK…IRKL, and EKTR…VMDF.

Belongs to the mitochondrial carrier (TC 2.A.29) family.

Its subcellular location is the mitochondrion inner membrane. In terms of biological role, transports C5-C7 oxodicarboxylates across the inner membranes of mitochondria. Can transport 2-oxoadipate, 2-oxoglutarate, adipate, glutarate, 2-oxopimelate, oxaloacetate, citrate and malate. The main physiological role is probably to supply 2-oxoadipate and 2-oxoglutarate from the mitochondrial matrix to the cytosol where they are used in the biosynthesis of lysine and glutamate, respectively, and in lysine catabolism. The polypeptide is Mitochondrial 2-oxodicarboxylate carrier 1 (ODC1) (Saccharomyces cerevisiae (strain ATCC 204508 / S288c) (Baker's yeast)).